The sequence spans 570 residues: Rqc2 homolog RqcH (570 aa).

Residues 1 to 173 are NFACT-N domain; that stretch reads MSFDGMFTYG…LPPAQDKISP (173 aa). The segment at 179–281 is hhH domain; that stretch reads DDILRHLSFQ…ELLDRFYFGK (103 aa). Coiled-coil stretches lie at residues 279 to 336 and 368 to 430; these read FGKA…TANL and TPSE…VEGK. The interval 282 to 434 is coiled-coil-M (CCM); the sequence is AERDRVKQQA…ELVEGKYLRP (153 aa). Positions 446–570 are NFACT-R; that stretch reads HNPVLETYES…ADTVIKLKKS (125 aa).

It belongs to the NEMF family. Associates with isolated or stalled 50S ribosomal subunits. Binds to RqcP. Interacts with ribosomal protein uL11. Displaced from the 50S subunit by thiostrepton. In crystallized 50S subunits RqcH is variously associated with A/P-site tRNA, P-site tRNA and RqcP, an E-site tRNA or A- and P-site tRNAs and RqcP2(YlmH).

In terms of biological role, key component of the ribosome quality control system (RQC), a ribosome-associated complex that mediates the extraction of incompletely synthesized nascent chains from stalled ribosomes and their subsequent degradation. RqcH recruits Ala-charged tRNA, and with RqcP directs the elongation of stalled nascent chains on 50S ribosomal subunits, leading to non-templated C-terminal alanine extensions (Ala tail). The Ala tail promotes nascent chain degradation. RqcH, RqcP and charged tRNA(Ala) are necessary and sufficient to add an Ala tail to a model stalled nascent peptide; does not add Val. Binds the P-site tRNA in 50S ribosomal subunit, unwinds the anticodon stem and interacts with the splayed anticodon. Selectively binds tRNA(Ala) isoacceptors, even in the absence of the 50S ribosomal subunit. Adds between 1 and at least 8 Ala residues to the nascent chain; detection of the Ala tail requires either deletion of clpP or its inhibition. Binds to 50S ribosomal subunits, at least 30% of which contain a P-site tRNA and thus are obstructed. This chain is Rqc2 homolog RqcH, found in Bacillus subtilis (strain 168).